We begin with the raw amino-acid sequence, 193 residues long: Ribosomal RNA large subunit methyltransferase E (193 aa).

Glycine 49, phenylalanine 51, aspartate 69, aspartate 86, and aspartate 106 together coordinate S-adenosyl-L-methionine. Lysine 146 (proton acceptor) is an active-site residue.

The protein belongs to the class I-like SAM-binding methyltransferase superfamily. RNA methyltransferase RlmE family.

Its subcellular location is the cytoplasm. The enzyme catalyses uridine(2552) in 23S rRNA + S-adenosyl-L-methionine = 2'-O-methyluridine(2552) in 23S rRNA + S-adenosyl-L-homocysteine + H(+). Functionally, specifically methylates the uridine in position 2552 of 23S rRNA at the 2'-O position of the ribose in the fully assembled 50S ribosomal subunit. This chain is Ribosomal RNA large subunit methyltransferase E, found in Brachyspira hyodysenteriae (strain ATCC 49526 / WA1).